The chain runs to 156 residues: Small ribosomal subunit protein uS7 (156 aa).

It belongs to the universal ribosomal protein uS7 family. Part of the 30S ribosomal subunit. Contacts proteins S9 and S11.

In terms of biological role, one of the primary rRNA binding proteins, it binds directly to 16S rRNA where it nucleates assembly of the head domain of the 30S subunit. Is located at the subunit interface close to the decoding center, probably blocks exit of the E-site tRNA. This chain is Small ribosomal subunit protein uS7, found in Proteus mirabilis (strain HI4320).